The chain runs to 590 residues: Aspartate--tRNA(Asp/Asn) ligase (590 aa).

Position 170 (Glu-170) interacts with L-aspartate. An aspartate region spans residues 194–197 (QLFK). An L-aspartate-binding site is contributed by Arg-216. ATP is bound by residues 216-218 (RDE) and Gln-225. His-448 is a binding site for L-aspartate. An ATP-binding site is contributed by Glu-482. Arg-489 contributes to the L-aspartate binding site. Residue 534-537 (GWDR) participates in ATP binding. The segment at 557-590 (SGGGADPLTGAPAPITPQQRRESGIDAKPKKDGE) is disordered. Residues 575–590 (QRRESGIDAKPKKDGE) are compositionally biased toward basic and acidic residues.

This sequence belongs to the class-II aminoacyl-tRNA synthetase family. Type 1 subfamily. In terms of assembly, homodimer.

The protein localises to the cytoplasm. The catalysed reaction is tRNA(Asx) + L-aspartate + ATP = L-aspartyl-tRNA(Asx) + AMP + diphosphate. In terms of biological role, aspartyl-tRNA synthetase with relaxed tRNA specificity since it is able to aspartylate not only its cognate tRNA(Asp) but also tRNA(Asn). Reaction proceeds in two steps: L-aspartate is first activated by ATP to form Asp-AMP and then transferred to the acceptor end of tRNA(Asp/Asn). This chain is Aspartate--tRNA(Asp/Asn) ligase, found in Mycobacterium sp. (strain KMS).